Reading from the N-terminus, the 281-residue chain is MFKRFVLSLAFLIMAAVVSFQVIFTVPEHPQIITQTGSEITEDIRCIEFSGAKALDDNGELNLLVWNIYKQNRANWQSELELFSADKQLLLLQEASMTDSFKQWLVDGSWVSNQVSAFKALGSGAGVISIAQKQPIKACAYTSKEPWLRLPKSALYSQYRLSNGESLAVINVHAINFTVGTEEYTSQLSALETLLKQHSGPIVFAGDFNSWSEYRITAMKQALREANLREVQFSPDHRTQFITGLPLDHVFYRGLTLKNAKAPQSDASDHNPLLVSFTLND.

This sequence belongs to the UPF0294 family.

It localises to the cytoplasm. The protein is UPF0294 protein VP2298 of Vibrio parahaemolyticus serotype O3:K6 (strain RIMD 2210633).